A 268-amino-acid chain; its full sequence is MAQNGSVEQFLDVAVEAAKKAGEIIREGFYKTKHVEHKGMVDLVTETDKACEDFIFNHLKQRFPSHKFIGEETTAACGNFELTDEPTWIVDPLDGTTNFVHGFPFVCVSIGLTIEKKPTVGVVYNPIIDELFTGIDGKGAFLNGKPIKVSSQSELVKALLATEAGTNRDKLVVDATTGRINSLLFKVRSLRMCGSCALNLCGVACGRLDLFYELEFGGPWDVAGGAVIVKEAGGFVFDPSGSEFDLTARRVAATNAHLKDAFIKALNE.

The Mg(2+) site is built by glutamate 71, aspartate 91, leucine 93, and aspartate 94. Glutamate 71 is a binding site for substrate. Residues 93–96, 194–196, glutamate 213, and aspartate 221 contribute to the substrate site; these read LDGT and GSC. Aspartate 221 contacts Mg(2+).

It belongs to the inositol monophosphatase superfamily. Mg(2+) serves as cofactor. In terms of tissue distribution, expressed in the shoot apex, roots, stems, leaves, flowers and young and mature green fruits.

It catalyses the reaction a myo-inositol phosphate + H2O = myo-inositol + phosphate. It participates in polyol metabolism; myo-inositol biosynthesis; myo-inositol from D-glucose 6-phosphate: step 2/2. Its function is as follows. Responsible for the provision of inositol required for synthesis of phosphatidylinositol and polyphosphoinositides. This chain is Inositol monophosphatase 3 (IMP3), found in Solanum lycopersicum (Tomato).